Here is a 230-residue protein sequence, read N- to C-terminus: Lecithin retinol acyltransferase (230 aa).

Over 1–194 the chain is Cytoplasmic; that stretch reads MKNPMLEVVS…VKIIIRDQRS (194 aa). Residues 50 to 177 enclose the LRAT domain; the sequence is VLEVPRTHLT…CRYGTPISPQ (128 aa). Residues histidine 60 and histidine 72 contribute to the active site. Catalysis depends on cysteine 161, which acts as the Acyl-thioester intermediate. A helical membrane pass occupies residues 195–215; that stretch reads VLASAVLGLASIVCTGLVSYT. At 216-230 the chain is on the lumenal side; sequence TLPAIFIPFFLWMAG.

It belongs to the H-rev107 family. In terms of tissue distribution, hepatic stellate cells and endothelial cells (at protein level). Found at high levels in testis and liver, followed by retinal pigment epithelium, small intestine, prostate, pancreas and colon. Low expression observed in brain. In fetal tissues, expressed in retinal pigment epithelium and liver, and barely in the brain.

The protein localises to the endoplasmic reticulum membrane. Its subcellular location is the rough endoplasmic reticulum. It is found in the endosome. The protein resides in the multivesicular body. It localises to the cytoplasm. The protein localises to the perinuclear region. The catalysed reaction is all-trans-retinol--[retinol-binding protein] + a 1,2-diacyl-sn-glycero-3-phosphocholine = apo--[retinol-binding protein] + an all-trans-retinyl ester + a 2-acyl-sn-glycero-3-phosphocholine. It carries out the reaction 1,2-dihexadecanoyl-sn-glycero-3-phosphocholine + all-trans-retinol = all-trans-retinyl hexadecanoate + 2-hexadecanoyl-sn-glycero-3-phosphocholine. It catalyses the reaction 1,2-diheptanoyl-sn-glycero-3-phosphocholine + all-trans-retinol--[retinol-binding protein] = all-trans-retinyl heptanoate + 2-heptanoyl-sn-glycero-3-phosphocholine + apo--[retinol-binding protein]. The enzyme catalyses 1,2-dioctanoyl-sn-glycero-3-phosphocholine + all-trans-retinol--[retinol-binding protein] = 2-octanoyl-sn-glycero-3-phosphocholine + all-trans-retinyl octanoate + apo--[retinol-binding protein]. The catalysed reaction is all-trans-retinol--[retinol-binding protein] + 1,2-dihexadecanoyl-sn-glycero-3-phosphocholine = apo--[retinol-binding protein] + all-trans-retinyl hexadecanoate + 2-hexadecanoyl-sn-glycero-3-phosphocholine. It carries out the reaction 1,2-didodecanoyl-sn-glycero-3-phosphocholine + all-trans-retinol--[retinol-binding protein] = 2-dodecanoyl-sn-glycero-3-phosphocholine + all-trans-retinyl dodecanoate + apo--[retinol-binding protein]. It functions in the pathway cofactor metabolism; retinol metabolism. Its activity is regulated as follows. Inhibited by all-trans-retinyl alpha-bromoacetate and N-boc-L-biocytinyl-11-aminoundecane chloro-methyl ketone (BACMK). Transfers the acyl group from the sn-1 position of phosphatidylcholine to all-trans retinol, producing all-trans retinyl esters. Retinyl esters are storage forms of vitamin A. LRAT plays a critical role in vision. It provides the all-trans retinyl ester substrates for the isomerohydrolase which processes the esters into 11-cis-retinol in the retinal pigment epithelium; due to a membrane-associated alcohol dehydrogenase, 11 cis-retinol is oxidized and converted into 11-cis-retinaldehyde which is the chromophore for rhodopsin and the cone photopigments. Required for the survival of cone photoreceptors and correct rod photoreceptor cell morphology. This chain is Lecithin retinol acyltransferase, found in Homo sapiens (Human).